We begin with the raw amino-acid sequence, 207 residues long: Outer-membrane lipoprotein carrier protein (207 aa).

An N-terminal signal peptide occupies residues 1-22 (MKLSEKFCVFLFFLLFTSTTHA).

It belongs to the LolA family. As to quaternary structure, monomer.

Its subcellular location is the periplasm. Its function is as follows. Participates in the translocation of lipoproteins from the inner membrane to the outer membrane. Only forms a complex with a lipoprotein if the residue after the N-terminal Cys is not an aspartate (The Asp acts as a targeting signal to indicate that the lipoprotein should stay in the inner membrane). The sequence is that of Outer-membrane lipoprotein carrier protein from Nitrosospira multiformis (strain ATCC 25196 / NCIMB 11849 / C 71).